A 432-amino-acid chain; its full sequence is 3-phosphoshikimate 1-carboxyvinyltransferase (432 aa).

Residues Lys-22, Ser-23, and Arg-27 each coordinate 3-phosphoshikimate. Lys-22 serves as a coordination point for phosphoenolpyruvate. Residues Gly-96 and Arg-127 each coordinate phosphoenolpyruvate. Residues Ser-173, Ser-174, Gln-175, Ser-201, Asp-316, Asn-339, and Lys-343 each contribute to the 3-phosphoshikimate site. Gln-175 serves as a coordination point for phosphoenolpyruvate. The active-site Proton acceptor is Asp-316. Phosphoenolpyruvate-binding residues include Arg-347, Arg-391, and Lys-416.

It belongs to the EPSP synthase family. As to quaternary structure, monomer.

It localises to the cytoplasm. The catalysed reaction is 3-phosphoshikimate + phosphoenolpyruvate = 5-O-(1-carboxyvinyl)-3-phosphoshikimate + phosphate. The protein operates within metabolic intermediate biosynthesis; chorismate biosynthesis; chorismate from D-erythrose 4-phosphate and phosphoenolpyruvate: step 6/7. Catalyzes the transfer of the enolpyruvyl moiety of phosphoenolpyruvate (PEP) to the 5-hydroxyl of shikimate-3-phosphate (S3P) to produce enolpyruvyl shikimate-3-phosphate and inorganic phosphate. The polypeptide is 3-phosphoshikimate 1-carboxyvinyltransferase (Histophilus somni (Haemophilus somnus)).